We begin with the raw amino-acid sequence, 196 residues long: Probable nicotinate-nucleotide adenylyltransferase (196 aa).

Belongs to the NadD family.

It carries out the reaction nicotinate beta-D-ribonucleotide + ATP + H(+) = deamido-NAD(+) + diphosphate. It functions in the pathway cofactor biosynthesis; NAD(+) biosynthesis; deamido-NAD(+) from nicotinate D-ribonucleotide: step 1/1. In terms of biological role, catalyzes the reversible adenylation of nicotinate mononucleotide (NaMN) to nicotinic acid adenine dinucleotide (NaAD). The chain is Probable nicotinate-nucleotide adenylyltransferase from Caldicellulosiruptor saccharolyticus (strain ATCC 43494 / DSM 8903 / Tp8T 6331).